A 165-amino-acid chain; its full sequence is MKTSRLPIAIQQAVMRRLREKLAQANLKLGRNYPEPKLSYTQRGTSAGTAWLESYEIRLNPVLLLENSEAFIEEVVPHELAHLLVWKHFGRVAPHGKEWKWMMESVLGVPARRTHQFELQSVRRNTFPYRCKCQEHQLTVRRHNRVVRGEAVYRCVHCGEQLVAK.

The region spanning 20-163 (EKLAQANLKL…RCVHCGEQLV (144 aa)) is the SprT-like domain. Residue H78 participates in Zn(2+) binding. Residue E79 is part of the active site. Residue H82 coordinates Zn(2+).

Belongs to the SprT family. Zn(2+) is required as a cofactor.

It localises to the cytoplasm. The sequence is that of Protein SprT from Escherichia coli O127:H6 (strain E2348/69 / EPEC).